The primary structure comprises 580 residues: Cytochrome c oxidase subunit 1 (580 aa).

Positions Met1–Lys25 are disordered. Residues Ile43–Ile63 traverse the membrane as a helical segment. His87 lines the Fe(II)-heme a pocket. 6 helical membrane passes run Val90–Leu110, Leu122–Leu142, Met171–Leu191, Ile214–Gly234, Leu259–Ile279, and Phe292–Trp312. His265 and Tyr269 together coordinate Cu cation. The 1'-histidyl-3'-tyrosine (His-Tyr) cross-link spans His265–Tyr269. Cu cation is bound by residues His314 and His315. 2 helical membrane-spanning segments follow: residues Met316–Val336 and Met360–Leu380. Position 398 (His398) interacts with heme a3. 3 consecutive transmembrane segments (helical) span residues Phe399–Phe419, Ile434–Gly454, and Ile477–Phe497. His400 is a binding site for Fe(II)-heme a.

Belongs to the heme-copper respiratory oxidase family. In terms of assembly, associates with subunits II, III and IV to form cytochrome c oxidase. Requires Cu(2+) as cofactor. Heme is required as a cofactor.

It is found in the cell membrane. It catalyses the reaction 4 Fe(II)-[cytochrome c] + O2 + 8 H(+)(in) = 4 Fe(III)-[cytochrome c] + 2 H2O + 4 H(+)(out). Its pathway is energy metabolism; oxidative phosphorylation. Its function is as follows. Cytochrome c oxidase is the component of the respiratory chain that catalyzes the reduction of oxygen to water. Subunits 1-3 form the functional core of the enzyme complex. CO I is the catalytic subunit of the enzyme. Electrons originating in cytochrome c are transferred via the copper A center of subunit 2 and heme A of subunit 1 to the bimetallic center formed by heme A3 and copper B. This Corynebacterium efficiens (strain DSM 44549 / YS-314 / AJ 12310 / JCM 11189 / NBRC 100395) protein is Cytochrome c oxidase subunit 1 (ctaD).